A 193-amino-acid polypeptide reads, in one-letter code: Probable GTP-binding protein EngB (193 aa).

The EngB-type G domain maps to 22 to 193; that stretch reads LLPEVALAGR…AAWEAIYRHL (172 aa). Residues 30–37, 57–61, 75–78, 142–145, and 174–176 contribute to the GTP site; these read GRSNVGKS, GKTQT, DVPG, TKLD, and FSS. Positions 37 and 59 each coordinate Mg(2+).

It belongs to the TRAFAC class TrmE-Era-EngA-EngB-Septin-like GTPase superfamily. EngB GTPase family. Requires Mg(2+) as cofactor.

Necessary for normal cell division and for the maintenance of normal septation. The sequence is that of Probable GTP-binding protein EngB from Exiguobacterium sibiricum (strain DSM 17290 / CCUG 55495 / CIP 109462 / JCM 13490 / 255-15).